Here is a 202-residue protein sequence, read N- to C-terminus: Peptidyl-tRNA hydrolase (202 aa).

Residue Tyr-19 coordinates tRNA. The Proton acceptor role is filled by His-24. TRNA is bound by residues Tyr-70, Asn-72, and Asn-118.

It belongs to the PTH family. In terms of assembly, monomer.

It localises to the cytoplasm. It carries out the reaction an N-acyl-L-alpha-aminoacyl-tRNA + H2O = an N-acyl-L-amino acid + a tRNA + H(+). Hydrolyzes ribosome-free peptidyl-tRNAs (with 1 or more amino acids incorporated), which drop off the ribosome during protein synthesis, or as a result of ribosome stalling. In terms of biological role, catalyzes the release of premature peptidyl moieties from peptidyl-tRNA molecules trapped in stalled 50S ribosomal subunits, and thus maintains levels of free tRNAs and 50S ribosomes. The protein is Peptidyl-tRNA hydrolase of Prochlorococcus marinus (strain NATL2A).